Here is a 246-residue protein sequence, read N- to C-terminus: E3 ubiquitin-protein ligase MARCHF2 (246 aa).

The RING-CH-type zinc-finger motif lies at Gly-56–Glu-116. Residues Cys-64, Cys-67, Cys-80, Cys-82, His-90, Cys-93, Cys-106, and Cys-109 each contribute to the Zn(2+) site. Helical transmembrane passes span Leu-138–Leu-158 and Ala-175–Val-195.

The protein resides in the endoplasmic reticulum membrane. The protein localises to the lysosome membrane. Its subcellular location is the endosome membrane. The catalysed reaction is S-ubiquitinyl-[E2 ubiquitin-conjugating enzyme]-L-cysteine + [acceptor protein]-L-lysine = [E2 ubiquitin-conjugating enzyme]-L-cysteine + N(6)-ubiquitinyl-[acceptor protein]-L-lysine.. The protein operates within protein modification; protein ubiquitination. In terms of biological role, E3 ubiquitin-protein ligase which may be involved in endosomal trafficking. E3 ubiquitin ligases accept ubiquitin from an E2 ubiquitin-conjugating enzyme in the form of a thioester and then directly transfer the ubiquitin to targeted substrates. The chain is E3 ubiquitin-protein ligase MARCHF2 (marchf2) from Xenopus tropicalis (Western clawed frog).